Reading from the N-terminus, the 144-residue chain is Small ribosomal subunit protein bS6 (144 aa).

The interval 97-144 (DTEQSLIMKSKDEKGDKPERSERRRRDDEEGDAAPAATDTDGDNAEAA) is disordered. Over residues 105–124 (KSKDEKGDKPERSERRRRDD) the composition is skewed to basic and acidic residues.

This sequence belongs to the bacterial ribosomal protein bS6 family.

Its function is as follows. Binds together with bS18 to 16S ribosomal RNA. The sequence is that of Small ribosomal subunit protein bS6 from Xanthomonas campestris pv. campestris (strain 8004).